Here is a 288-residue protein sequence, read N- to C-terminus: B3 domain-containing protein At2g35310 (288 aa).

DNA-binding regions (TF-B3) lie at residues 19 to 114 and 196 to 288; these read FFKV…FMQD and AEFS…VSKP.

The protein localises to the nucleus. The chain is B3 domain-containing protein At2g35310 from Arabidopsis thaliana (Mouse-ear cress).